We begin with the raw amino-acid sequence, 157 residues long: Vesicle transport protein SFT2B (157 aa).

The residue at position 1 (Met1) is an N-acetylmethionine. At 1 to 36 the chain is on the cytoplasmic side; it reads MDKLKKVLSGQDTEDRSGLSEVVESSSLSWSTRIKG. Phosphoserine is present on Ser9. The helical transmembrane segment at 37–57 threads the bilayer; it reads FIVCFALGILCSLLGTLLLWV. At 58-61 the chain is on the lumenal side; the sequence is SRKG. The helical transmembrane segment at 62–82 threads the bilayer; it reads LFAVFYTLGNITSIGSTMFLM. At 83 to 96 the chain is on the cytoplasmic side; the sequence is GPLKQLKRMFEPTR. A helical transmembrane segment spans residues 97–117; the sequence is LIATILVLLFFVLTLCSAFLW. The Lumenal segment spans residues 118-120; it reads NKG. The chain crosses the membrane as a helical span at residues 121-141; that stretch reads LALIFCILQSLALTWYSLSYI. Residues 142–157 lie on the Cytoplasmic side of the membrane; that stretch reads PYARDAVKKCFAVCLT.

The protein belongs to the SFT2 family.

The protein resides in the membrane. Its function is as follows. May be involved in fusion of retrograde transport vesicles derived from an endocytic compartment with the Golgi complex. In Rattus norvegicus (Rat), this protein is Vesicle transport protein SFT2B.